A 642-amino-acid chain; its full sequence is DNA primase (642 aa).

The CHC2-type zinc finger occupies 41 to 65 (CPFHNEKSPSFHVRPNHGHFHCFGC). Residues 262-348 (HQAVVVEGYT…AGKSFVAVAA (87 aa)) form the Toprim domain. Residues Glu-268, Asp-319, and Asp-321 each contribute to the Mg(2+) site. Positions 445–480 (NRRSVPERTRRRSVSVEQSPFMQPPGAPADQLAARP) are disordered.

The protein belongs to the DnaG primase family. Monomer. Interacts with DnaB. The cofactor is Zn(2+). Mg(2+) is required as a cofactor.

It catalyses the reaction ssDNA + n NTP = ssDNA/pppN(pN)n-1 hybrid + (n-1) diphosphate.. Its function is as follows. RNA polymerase that catalyzes the synthesis of short RNA molecules used as primers for DNA polymerase during DNA replication. The chain is DNA primase from Mycobacterium leprae (strain TN).